The chain runs to 123 residues: Large ribosomal subunit protein uL14 (123 aa).

Belongs to the universal ribosomal protein uL14 family. As to quaternary structure, part of the 50S ribosomal subunit. Forms a cluster with proteins L3 and L19. In the 70S ribosome, L14 and L19 interact and together make contacts with the 16S rRNA in bridges B5 and B8.

Its function is as follows. Binds to 23S rRNA. Forms part of two intersubunit bridges in the 70S ribosome. This chain is Large ribosomal subunit protein uL14, found in Vibrio parahaemolyticus serotype O3:K6 (strain RIMD 2210633).